The following is a 396-amino-acid chain: Elongation factor Tu 1 (396 aa).

One can recognise a tr-type G domain in the interval 10–206 (KLHVNVGTIG…ALDTFIPDPT (197 aa)). Positions 19-26 (GHVDHGKT) are G1. 19 to 26 (GHVDHGKT) is a binding site for GTP. A Mg(2+)-binding site is contributed by Thr26. The G2 stretch occupies residues 60–64 (GITIS). The tract at residues 81 to 84 (DCPG) is G3. GTP contacts are provided by residues 81–85 (DCPGH) and 136–139 (NKAD). The segment at 136–139 (NKAD) is G4. The G5 stretch occupies residues 174–176 (SAR).

It belongs to the TRAFAC class translation factor GTPase superfamily. Classic translation factor GTPase family. EF-Tu/EF-1A subfamily. Monomer.

The protein resides in the cytoplasm. The enzyme catalyses GTP + H2O = GDP + phosphate + H(+). Its function is as follows. GTP hydrolase that promotes the GTP-dependent binding of aminoacyl-tRNA to the A-site of ribosomes during protein biosynthesis. This chain is Elongation factor Tu 1, found in Xanthomonas campestris pv. campestris (strain B100).